Reading from the N-terminus, the 439-residue chain is AT-hook motif nuclear-localized protein 13 (439 aa).

Disordered stretches follow at residues 1–46 (MDSR…NSYN), 69–216 (QRLP…LGGT), and 342–439 (GRKQ…NSPQ). Low complexity-rich tracts occupy residues 9 to 31 (QQQQ…QQQQ) and 79 to 95 (PHQP…PQQQ). Positions 109-120 (SPSSVAATQQHS) are enriched in polar residues. Basic residues predominate over residues 130 to 139 (VKKKRGRPRK). The Bipartite nuclear localization signal motif lies at 131–139 (KKKRGRPRK). The a.T hook 1 DNA-binding region spans 131–143 (KKKRGRPRKYAAD). Gly residues-rich tracts occupy residues 143 to 152 (DGGGGGGGGS) and 171 to 183 (YGGG…GGDS). The segment at residues 196–208 (KRNRGRPPGSGKK) is a DNA-binding region (a.T hook 2). Residues 217-359 (GGVGFTPHVI…GRAQNTPEPA (143 aa)) form the PPC domain. Over residues 347–357 (QSAGRAQNTPE) the composition is skewed to polar residues. Composition is skewed to low complexity over residues 376-386 (SPRSQGQQHSS) and 403-416 (NNNN…FGNS). The span at 428–439 (MYQNLWPGNSPQ) shows a compositional bias: polar residues.

The protein localises to the nucleus. In terms of biological role, transcription factor that specifically binds AT-rich DNA sequences related to the nuclear matrix attachment regions (MARs). The chain is AT-hook motif nuclear-localized protein 13 from Arabidopsis thaliana (Mouse-ear cress).